The primary structure comprises 98 residues: NADH-ubiquinone oxidoreductase chain 4L (98 aa).

3 consecutive transmembrane segments (helical) span residues P2 to F22, S29 to L49, and I61 to V81.

It belongs to the complex I subunit 4L family. In terms of assembly, core subunit of respiratory chain NADH dehydrogenase (Complex I) which is composed of 45 different subunits.

The protein localises to the mitochondrion inner membrane. The enzyme catalyses a ubiquinone + NADH + 5 H(+)(in) = a ubiquinol + NAD(+) + 4 H(+)(out). In terms of biological role, core subunit of the mitochondrial membrane respiratory chain NADH dehydrogenase (Complex I) which catalyzes electron transfer from NADH through the respiratory chain, using ubiquinone as an electron acceptor. Part of the enzyme membrane arm which is embedded in the lipid bilayer and involved in proton translocation. The protein is NADH-ubiquinone oxidoreductase chain 4L (MT-ND4L) of Propithecus tattersalli (Golden-crowned Sifaka).